Consider the following 450-residue polypeptide: MPSPTSSSASVFSSHLFFVFCIFSQIAQSYAQFNRFFDPSIPEQETVLTDYDYNMIGHFRENDQWFVNDSAMYNPLRFEGDIANSGLNSRSINTFFGDSPLFGIFGVQRNAVRQTYLKWEQARIPYTISSQYSSYSRSKIAEAIEEYRKKTCIDFSPKSAGDLDYIHIVPDDGCYSLVGRIGGKQPVSLGDGCIQKGIIIHELMHAVGFFHEQSRADRDEYVKINWSNVEAGLQDQFDKYSLNMIDHLGTKYDYGSVMHYAPTAFSKNGKPTIEPIEKNVEIGQRAGFSENDIYKINMLYNCPTFTATTLAPENTKRVKSITKKVTSATGSPLSKKGEIGSSIGDKGDRGDNSVLSSLISIHSGLGKCEDRRKDCEFLARAGHCESRFSIRFMTENCANSCGKCIAEEKRKEVCEDARTWCERWANSGMCNQTVFKDYMRQKCAKSCNFC.

An N-terminal signal peptide occupies residues Met-1–Ala-31. N-linked (GlcNAc...) asparagine glycosylation occurs at Asn-68. The Peptidase M12A domain maps to Asn-110–Pro-303. 2 disulfides stabilise this stretch: Cys-152/Cys-302 and Cys-174/Cys-193. Residue His-201 participates in Zn(2+) binding. Residue Glu-202 is part of the active site. Zn(2+)-binding residues include His-205 and His-211. Residue Asn-225 is glycosylated (N-linked (GlcNAc...) asparagine). The Cell attachment site motif lies at Arg-349–Asp-351. 6 disulfides stabilise this stretch: Cys-368–Cys-404, Cys-375–Cys-397, Cys-384–Cys-401, Cys-414–Cys-450, Cys-421–Cys-443, and Cys-430–Cys-447. ShKT domains follow at residues Cys-368 to Cys-404 and Cys-414 to Cys-450. Residue Asn-431 is glycosylated (N-linked (GlcNAc...) asparagine).

Zn(2+) serves as cofactor.

The protein localises to the secreted. Its function is as follows. Metalloprotease. In Caenorhabditis elegans, this protein is Zinc metalloproteinase nas-13 (nas-13).